Consider the following 757-residue polypeptide: Alcohol dehydrogenase (quinone), dehydrogenase subunit (757 aa).

A signal peptide spans 1–34 (MTSGLLTPIKVTKKRLLSCAAALAFSAAVPVAFA). Gln35 bears the Pyrrolidone carboxylic acid mark. A pyrroloquinoline quinone-binding site is contributed by Glu95. Cys141 and Cys142 form a disulfide bridge. A pyrroloquinoline quinone-binding site is contributed by Arg147. Glu215 contributes to the Ca(2+) binding site. Thr277 provides a ligand contact to pyrroloquinoline quinone. Residues Asn297 and Asp342 each contribute to the Ca(2+) site. The active-site Proton acceptor is Asp342. Positions 369 and 588 each coordinate pyrroloquinoline quinone. The Cytochrome c domain maps to 640 to 719 (ARQKDGYFMY…DIRNFIVKRA (80 aa)). Positions 653, 656, 657, and 696 each coordinate heme c. The disordered stretch occupies residues 726 to 757 (EVKARENSTGVPNDQFLNVPQSTADVPTADHP). The segment covering 732–750 (NSTGVPNDQFLNVPQSTAD) has biased composition (polar residues).

Belongs to the bacterial PQQ dehydrogenase family. The alcohol dehydrogenase multicomponent enzyme system is composed of a dehydrogenase subunit I (AdhA), a cytochrome c subunit II (AdhB) and a subunit III (AdhS). It depends on pyrroloquinoline quinone as a cofactor. Requires Ca(2+) as cofactor. The cofactor is heme c.

It is found in the cell membrane. The catalysed reaction is ethanol + a ubiquinone = a ubiquinol + acetaldehyde. With respect to regulation, 2,6-dichloro-4-dicyanovinylphenol (PC16) and antimycin A inhibit ubiquinol oxidation activity more selectively than the ubiquinone reductase activity. In terms of biological role, dehydrogenase component of the alcohol dehydrogenase multicomponent enzyme system which is involved in the production of acetic acid and in the ethanol oxidase respiratory chain. Quinohemoprotein alcohol dehydrogenase (ADH) catalyzes the oxidation of ethanol to acetaldehyde by transferring electrons to the ubiquinone embedded in the membrane phospholipids. The electrons transfer from ethanol to membranous ubiquinone occurs from pyrroloquinoline quinone (PQQ) to one heme c in subunit I (AdhA), and finally to two heme c in subunit II (AdhB). Besides ubiquinone reduction, ADH also has a ubiquinol (QH2) oxidation reaction which mediates electron transfer from ubiquinol to the non-energy generating bypass oxidase system. The electrons transfer occurs from ubiquinol (QH2) to the additional heme c within subunit II (AdhB). Also able to use quinone analogs such as 2,3-dimethoxy-5-methyl-6-n-decyl-1,4-benzoquinone (DB) and 2,3-dimethoxy-5-methyl-6-n-pentyl-1,4-benzoquinone (PB). The protein is Alcohol dehydrogenase (quinone), dehydrogenase subunit of Gluconobacter oxydans (strain 621H) (Gluconobacter suboxydans).